We begin with the raw amino-acid sequence, 200 residues long: Probable molybdenum cofactor guanylyltransferase (200 aa).

GTP contacts are provided by residues 9-11, Lys21, Asp69, and Asp100; that span reads LAG. Asp100 contributes to the Mg(2+) binding site.

Belongs to the MobA family. It depends on Mg(2+) as a cofactor.

Its subcellular location is the cytoplasm. The catalysed reaction is Mo-molybdopterin + GTP + H(+) = Mo-molybdopterin guanine dinucleotide + diphosphate. Functionally, transfers a GMP moiety from GTP to Mo-molybdopterin (Mo-MPT) cofactor (Moco or molybdenum cofactor) to form Mo-molybdopterin guanine dinucleotide (Mo-MGD) cofactor. The protein is Probable molybdenum cofactor guanylyltransferase of Bacillus anthracis (strain CDC 684 / NRRL 3495).